A 232-amino-acid chain; its full sequence is uncharacterized protein (232 aa).

The next 5 membrane-spanning stretches (helical) occupy residues 4–24, 42–62, 100–120, 145–165, and 171–191; these read LLGVFFVPIIPFSFVVDYVFE, VLVGALGVGKAGTLLILLAVL, LFFISAFAIPLTVIHFLILHM, LAFVALVSSLVIAPAYAFFTL, and GNLILTPILLIEWLVWLWVGF.

The protein localises to the cell membrane. This is an uncharacterized protein from Aquifex aeolicus (strain VF5).